The sequence spans 87 residues: Small ribosomal subunit protein bS20 (87 aa).

A compositionally biased stretch (basic residues) spans 1–22 (MANIKSAKKRAVQSEKRRKHNA). The disordered stretch occupies residues 1–27 (MANIKSAKKRAVQSEKRRKHNASSRSM).

The protein belongs to the bacterial ribosomal protein bS20 family.

Its function is as follows. Binds directly to 16S ribosomal RNA. This chain is Small ribosomal subunit protein bS20, found in Pectobacterium atrosepticum (strain SCRI 1043 / ATCC BAA-672) (Erwinia carotovora subsp. atroseptica).